Here is a 238-residue protein sequence, read N- to C-terminus: Transcription factor MYB27 (238 aa).

HTH myb-type domains lie at 6-58 (EETL…MNYL) and 59-113 (NPTL…RKKQ). The Nuclear localization signal motif lies at 31 to 38 (ERRWDSLA). 2 consecutive DNA-binding regions (H-T-H motif) follow at residues 34-58 (WDSL…MNYL) and 86-109 (WSKI…RTHY).

Its subcellular location is the nucleus. The protein is Transcription factor MYB27 of Arabidopsis thaliana (Mouse-ear cress).